Reading from the N-terminus, the 602-residue chain is Pentatricopeptide repeat-containing protein At3g04760, chloroplastic (602 aa).

The transit peptide at 1-78 (MTPLSSELVG…TDATLPTERR (78 aa)) directs the protein to the chloroplast. The segment covering 42 to 64 (FSNSNPNNDNGRSFSSSGARNLQ) has biased composition (polar residues). Residues 42 to 85 (FSNSNPNNDNGRSFSSSGARNLQTTTTTDATLPTERRQQHSQSL) are disordered. Positions 65–74 (TTTTTDATLP) are enriched in low complexity. PPR repeat units lie at residues 88 to 122 (RDTQ…GYNP), 123 to 153 (DVIL…LEKF), 157 to 191 (DVFA…DFSP), 192 to 226 (DTVT…NCQP), 227 to 261 (TVIT…GLKP), 262 to 296 (DMFT…GCEP), 297 to 331 (DVIS…KCDP), 332 to 366 (NVVT…GLTP), 367 to 401 (DAYS…GCLP), 402 to 436 (DIVN…GCSP), 437 to 471 (NSSS…GIDP), 472 to 506 (DEIT…EFHP), 507 to 541 (SVVT…GCRP), and 542 to 576 (NETT…DAIS).

Belongs to the PPR family. P subfamily.

It is found in the plastid. The protein localises to the chloroplast. This chain is Pentatricopeptide repeat-containing protein At3g04760, chloroplastic, found in Arabidopsis thaliana (Mouse-ear cress).